The sequence spans 207 residues: Outer-membrane lipoprotein LolB (207 aa).

The signal sequence occupies residues 1–21; the sequence is MPTNTVRCLRLLPLASVLLAA. C22 carries the N-palmitoyl cysteine lipid modification. A lipid anchor (S-diacylglycerol cysteine) is attached at C22.

It belongs to the LolB family. Monomer.

It is found in the cell outer membrane. Plays a critical role in the incorporation of lipoproteins in the outer membrane after they are released by the LolA protein. In Pectobacterium carotovorum subsp. carotovorum (strain PC1), this protein is Outer-membrane lipoprotein LolB.